Reading from the N-terminus, the 392-residue chain is Succinate--CoA ligase [ADP-forming] subunit beta (392 aa).

The 240-residue stretch at 9-248 folds into the ATP-grasp domain; it reads KDILKKFGVS…TNEEDPFEVE (240 aa). Residues Lys50, 57-59, Glu103, Met106, and Glu111 each bind ATP; that span reads GRG. Residues Asn203 and Asp217 each coordinate Mg(2+). Substrate is bound by residues Asn268 and 325-327; that span reads GIV.

This sequence belongs to the succinate/malate CoA ligase beta subunit family. Heterotetramer of two alpha and two beta subunits. Mg(2+) is required as a cofactor.

The enzyme catalyses succinate + ATP + CoA = succinyl-CoA + ADP + phosphate. It catalyses the reaction GTP + succinate + CoA = succinyl-CoA + GDP + phosphate. Its pathway is carbohydrate metabolism; tricarboxylic acid cycle; succinate from succinyl-CoA (ligase route): step 1/1. Succinyl-CoA synthetase functions in the citric acid cycle (TCA), coupling the hydrolysis of succinyl-CoA to the synthesis of either ATP or GTP and thus represents the only step of substrate-level phosphorylation in the TCA. The beta subunit provides nucleotide specificity of the enzyme and binds the substrate succinate, while the binding sites for coenzyme A and phosphate are found in the alpha subunit. The sequence is that of Succinate--CoA ligase [ADP-forming] subunit beta from Chlorobium limicola (strain DSM 245 / NBRC 103803 / 6330).